A 182-amino-acid polypeptide reads, in one-letter code: Adenine phosphoribosyltransferase (182 aa).

This sequence belongs to the purine/pyrimidine phosphoribosyltransferase family. In terms of assembly, homodimer.

It localises to the cytoplasm. It catalyses the reaction AMP + diphosphate = 5-phospho-alpha-D-ribose 1-diphosphate + adenine. Its pathway is purine metabolism; AMP biosynthesis via salvage pathway; AMP from adenine: step 1/1. Functionally, catalyzes a salvage reaction resulting in the formation of AMP, that is energically less costly than de novo synthesis. This chain is Adenine phosphoribosyltransferase, found in Campylobacter fetus subsp. fetus (strain 82-40).